A 293-amino-acid polypeptide reads, in one-letter code: Proline iminopeptidase (293 aa).

The region spanning 28–277 is the AB hydrolase-1 domain; it reads KPLVLLHGGP…FSRHMPFVEE (250 aa). Ser-104 functions as the Nucleophile in the catalytic mechanism. Asp-244 is a catalytic residue. His-271 (proton donor) is an active-site residue.

This sequence belongs to the peptidase S33 family.

The enzyme catalyses Release of N-terminal proline from a peptide.. Functionally, releases the N-terminal proline from various substrates. This Clostridium botulinum (strain Hall / ATCC 3502 / NCTC 13319 / Type A) protein is Proline iminopeptidase.